Consider the following 69-residue polypeptide: UPF0337 protein YjbJ (69 aa).

Belongs to the UPF0337 (CsbD) family.

In Escherichia coli O157:H7, this protein is UPF0337 protein YjbJ (yjbJ).